We begin with the raw amino-acid sequence, 47 residues long: Protein PsbN (47 aa).

Residues 9 to 31 (YSLLIAMVTITFGLTGYGLYTAF) traverse the membrane as a helical segment.

Belongs to the PsbN family.

It localises to the cellular thylakoid membrane. Its function is as follows. May play a role in photosystem I and II biogenesis. This Prochlorococcus marinus (strain MIT 9303) protein is Protein PsbN.